Consider the following 244-residue polypeptide: Carboxy-S-adenosyl-L-methionine synthase (244 aa).

S-adenosyl-L-methionine contacts are provided by residues tyrosine 40, 65 to 67 (GCS), 90 to 91 (DN), asparagine 134, and arginine 201.

The protein belongs to the class I-like SAM-binding methyltransferase superfamily. Cx-SAM synthase family. In terms of assembly, homodimer.

The catalysed reaction is prephenate + S-adenosyl-L-methionine = carboxy-S-adenosyl-L-methionine + 3-phenylpyruvate + H2O. Functionally, catalyzes the conversion of S-adenosyl-L-methionine (SAM) to carboxy-S-adenosyl-L-methionine (Cx-SAM). The sequence is that of Carboxy-S-adenosyl-L-methionine synthase from Citrifermentans bemidjiense (strain ATCC BAA-1014 / DSM 16622 / JCM 12645 / Bem) (Geobacter bemidjiensis).